Here is a 1073-residue protein sequence, read N- to C-terminus: Serine/threonine-protein phosphatase 6 regulatory ankyrin repeat subunit C (1073 aa).

ANK repeat units lie at residues 7–36 (TDQP…NINV), 40–69 (ERRT…NVNA), 73–102 (VWLT…DVNA), 106–135 (YWQT…TVNV), 139–168 (TGRT…SLST), 172–201 (KDRQ…DVMC), 205–234 (KGYT…EIDE), 238–267 (FGNT…NVNQ), 271–301 (KGFT…DVNF), 305–334 (EGKS…EIDC), 338–367 (YGNT…DTAR), 371–400 (HDMF…LYSI), 422–451 (LGRT…DLRR), 455–484 (FGRT…SINE), 488–544 (KGCT…DPSL), 548–578 (QGYT…CLED), 583–612 (IPVS…NLDV), 616–645 (KGRT…SALV), 650–679 (RKWT…RADI), 686–715 (HGQT…TADA), 719–748 (RGRT…FVLC), 752–781 (KGRT…STDP), 789–818 (SGYS…FAYL), 821–851 (NPFT…KIVN), 856–885 (KGRT…EVDT), 889–919 (LGRT…NITV), 923–952 (NKNT…DLGL), and 959–988 (ALQM…TVLA).

As to quaternary structure, protein phosphatase 6 (PP6) holoenzyme is proposed to be a heterotrimeric complex formed by the catalytic subunit, a SAPS domain-containing subunit (PP6R) and an ankyrin repeat-domain containing regulatory subunit (ARS).

Its function is as follows. Putative regulatory subunit of protein phosphatase 6 (PP6) that may be involved in the recognition of phosphoprotein substrates. The protein is Serine/threonine-protein phosphatase 6 regulatory ankyrin repeat subunit C (ANKRD52) of Gallus gallus (Chicken).